Here is a 195-residue protein sequence, read N- to C-terminus: Probable GTP-binding protein EngB (195 aa).

Positions 22–195 constitute an EngB-type G domain; the sequence is GYPEIALVGR…WKWIEDRMGE (174 aa). Residues 30–37, 57–61, 75–78, 142–145, and 173–176 contribute to the GTP site; these read GRSNVGKS, GKTQT, DVPG, TKSD, and MFSA. Positions 37 and 59 each coordinate Mg(2+).

This sequence belongs to the TRAFAC class TrmE-Era-EngA-EngB-Septin-like GTPase superfamily. EngB GTPase family. It depends on Mg(2+) as a cofactor.

Necessary for normal cell division and for the maintenance of normal septation. The sequence is that of Probable GTP-binding protein EngB from Pediococcus pentosaceus (strain ATCC 25745 / CCUG 21536 / LMG 10740 / 183-1w).